Consider the following 242-residue polypeptide: Carboxy-S-adenosyl-L-methionine synthase (242 aa).

S-adenosyl-L-methionine is bound by residues Y39, 64 to 66 (GCS), 89 to 90 (DN), 117 to 118 (DI), N132, and R199.

This sequence belongs to the class I-like SAM-binding methyltransferase superfamily. Cx-SAM synthase family. As to quaternary structure, homodimer.

It catalyses the reaction prephenate + S-adenosyl-L-methionine = carboxy-S-adenosyl-L-methionine + 3-phenylpyruvate + H2O. Functionally, catalyzes the conversion of S-adenosyl-L-methionine (SAM) to carboxy-S-adenosyl-L-methionine (Cx-SAM). This chain is Carboxy-S-adenosyl-L-methionine synthase, found in Vibrio atlanticus (strain LGP32) (Vibrio splendidus (strain Mel32)).